Here is an 88-residue protein sequence, read N- to C-terminus: Molybdopterin synthase sulfur carrier subunit (88 aa).

Position 88 is a 1-thioglycine; alternate (glycine 88). Glycine 88 carries the post-translational modification Glycyl adenylate; alternate.

The protein belongs to the MoaD family. MOCS2A subfamily. Heterotetramer; composed of 2 small (MOCS2A) and 2 large (MOCS2B) subunits. In terms of processing, C-terminal thiocarboxylation occurs in 2 steps, it is first acyl-adenylated (-COAMP) via the hesA/moeB/thiF part of MOCS3, then thiocarboxylated (-COSH) via the rhodanese domain of MOCS3. In terms of tissue distribution, widely expressed. Highest levels are found in heart and skeletal muscle. Lower levels are present in brain, kidney and pancreas. Very low levels are found in lung and peripheral blood leukocytes.

The protein resides in the cytoplasm. It localises to the cytosol. The protein operates within cofactor biosynthesis; molybdopterin biosynthesis. Functionally, acts as a sulfur carrier required for molybdopterin biosynthesis. Component of the molybdopterin synthase complex that catalyzes the conversion of precursor Z into molybdopterin by mediating the incorporation of 2 sulfur atoms into precursor Z to generate a dithiolene group. In the complex, serves as sulfur donor by being thiocarboxylated (-COSH) at its C-terminus by MOCS3. After interaction with MOCS2B, the sulfur is then transferred to precursor Z to form molybdopterin. This Homo sapiens (Human) protein is Molybdopterin synthase sulfur carrier subunit.